The chain runs to 222 residues: Pyrrolidone-carboxylate peptidase (222 aa).

Active-site residues include E80, C146, and H170.

Belongs to the peptidase C15 family. As to quaternary structure, homotetramer.

Its subcellular location is the cytoplasm. The catalysed reaction is Release of an N-terminal pyroglutamyl group from a polypeptide, the second amino acid generally not being Pro.. Its function is as follows. Removes 5-oxoproline from various penultimate amino acid residues except L-proline. The protein is Pyrrolidone-carboxylate peptidase of Mycobacterium tuberculosis (strain ATCC 25177 / H37Ra).